The following is a 111-amino-acid chain: Iron-sulfur cluster assembly protein CyaY (111 aa).

Belongs to the frataxin family.

In terms of biological role, involved in iron-sulfur (Fe-S) cluster assembly. May act as a regulator of Fe-S biogenesis. This Cupriavidus taiwanensis (strain DSM 17343 / BCRC 17206 / CCUG 44338 / CIP 107171 / LMG 19424 / R1) (Ralstonia taiwanensis (strain LMG 19424)) protein is Iron-sulfur cluster assembly protein CyaY.